Consider the following 191-residue polypeptide: Inosine triphosphate pyrophosphatase (191 aa).

ITP is bound at residue 9-14 (TGNAKK). Glu39 is a Mg(2+) binding site. ITP-binding positions include Lys51, 67-68 (DT), Lys84, 143-146 (FGWD), Lys166, and 171-172 (HR).

Belongs to the HAM1 NTPase family. In terms of assembly, homodimer. Requires Mg(2+) as cofactor. It depends on Mn(2+) as a cofactor.

It localises to the cytoplasm. The enzyme catalyses ITP + H2O = IMP + diphosphate + H(+). The catalysed reaction is dITP + H2O = dIMP + diphosphate + H(+). It carries out the reaction XTP + H2O = XMP + diphosphate + H(+). In terms of biological role, pyrophosphatase that hydrolyzes non-canonical purine nucleotides such as inosine triphosphate (ITP), deoxyinosine triphosphate (dITP) or xanthosine 5'-triphosphate (XTP) to their respective monophosphate derivatives. The enzyme does not distinguish between the deoxy- and ribose forms. Probably excludes non-canonical purines from RNA and DNA precursor pools, thus preventing their incorporation into RNA and DNA and avoiding chromosomal lesions. This is Inosine triphosphate pyrophosphatase from Drosophila melanogaster (Fruit fly).